We begin with the raw amino-acid sequence, 461 residues long: L-seryl-tRNA(Sec) selenium transferase (461 aa).

The residue at position 294 (Lys294) is an N6-(pyridoxal phosphate)lysine.

The protein belongs to the SelA family. Pyridoxal 5'-phosphate serves as cofactor.

The protein resides in the cytoplasm. It catalyses the reaction L-seryl-tRNA(Sec) + selenophosphate + H(+) = L-selenocysteinyl-tRNA(Sec) + phosphate. It functions in the pathway aminoacyl-tRNA biosynthesis; selenocysteinyl-tRNA(Sec) biosynthesis; selenocysteinyl-tRNA(Sec) from L-seryl-tRNA(Sec) (bacterial route): step 1/1. Converts seryl-tRNA(Sec) to selenocysteinyl-tRNA(Sec) required for selenoprotein biosynthesis. The polypeptide is L-seryl-tRNA(Sec) selenium transferase (Haemophilus influenzae (strain ATCC 51907 / DSM 11121 / KW20 / Rd)).